We begin with the raw amino-acid sequence, 177 residues long: Gamma-crystallin M1-2 (177 aa).

Beta/gamma crystallin 'Greek key' domains follow at residues 2–40 (GKII…RVEN) and 41–83 (GCWM…RLLS). Residues 84–90 (QNLGIGT) form a connecting peptide region. 2 Beta/gamma crystallin 'Greek key' domains span residues 91 to 131 (NKLR…NVLD) and 132 to 174 (GYWI…RRVI).

The protein belongs to the beta/gamma-crystallin family. As to quaternary structure, monomer.

Crystallins are the dominant structural components of the vertebrate eye lens. The chain is Gamma-crystallin M1-2 from Aquarana catesbeiana (American bullfrog).